Here is a 386-residue protein sequence, read N- to C-terminus: Pepsin A (386 aa).

The N-terminal stretch at 1–15 (MKWLLLISLVALSEC) is a signal peptide. Residues 16 to 60 (AIVKVPLVRKKSLRQNLIEHGLLNDFLKNQSPNPASKYFPQEPTV) constitute a propeptide, activation peptide. Residues 74 to 383 (YFGTIGIGTP…DRANNQVGLA (310 aa)) form the Peptidase A1 domain. Residue Asp-92 is part of the active site. 2 disulfides stabilise this stretch: Cys-105–Cys-110 and Cys-266–Cys-270. The active site involves Asp-275. Residues Cys-309 and Cys-342 are joined by a disulfide bond.

The protein belongs to the peptidase A1 family.

It localises to the secreted. It catalyses the reaction Preferential cleavage: hydrophobic, preferably aromatic, residues in P1 and P1' positions. Cleaves 1-Phe-|-Val-2, 4-Gln-|-His-5, 13-Glu-|-Ala-14, 14-Ala-|-Leu-15, 15-Leu-|-Tyr-16, 16-Tyr-|-Leu-17, 23-Gly-|-Phe-24, 24-Phe-|-Phe-25 and 25-Phe-|-Tyr-26 bonds in the B chain of insulin.. Its function is as follows. Shows particularly broad specificity; although bonds involving phenylalanine and leucine are preferred, many others are also cleaved to some extent. The protein is Pepsin A (PGA) of Canis lupus familiaris (Dog).